The sequence spans 117 residues: UPF0342 protein Bcer98_0695 (117 aa).

Belongs to the UPF0342 family.

This is UPF0342 protein Bcer98_0695 from Bacillus cytotoxicus (strain DSM 22905 / CIP 110041 / 391-98 / NVH 391-98).